Consider the following 284-residue polypeptide: uncharacterized protein (284 aa).

Belongs to the AtsA family.

This is an uncharacterized protein from Mycobacterium leprae (strain TN).